A 389-amino-acid chain; its full sequence is Dirigent protein 25 (389 aa).

The first 21 residues, 1-21 (MAGCKVLFFLILALAITFVSA), serve as a signal peptide directing secretion. 3 stretches are compositionally biased toward low complexity: residues 50–68 (GPFP…SGTG), 77–86 (LGTNTGPGPL), and 98–135 (SSGT…PLPT). Residues 50–135 (GPFPTANSGP…PGSGSGPLPT (86 aa)) are disordered.

Belongs to the plant dirigent protein family. As to quaternary structure, homodimer.

It is found in the secreted. The protein resides in the extracellular space. Its subcellular location is the apoplast. Functionally, dirigent proteins impart stereoselectivity on the phenoxy radical-coupling reaction, yielding optically active lignans from two molecules of coniferyl alcohol in the biosynthesis of lignans, flavonolignans, and alkaloids and thus plays a central role in plant secondary metabolism. The polypeptide is Dirigent protein 25 (DIR25) (Arabidopsis thaliana (Mouse-ear cress)).